Here is a 537-residue protein sequence, read N- to C-terminus: Eukaryotic translation initiation factor 3 subunit L (537 aa).

The segment covering 1–19 (MSRRVEFDLSTEDHSDRRR) has biased composition (basic and acidic residues). A disordered region spans residues 1–30 (MSRRVEFDLSTEDHSDRRRTNTFSSSADED). One can recognise a PCI domain in the interval 299-487 (EATKMFVNCL…GPSSADDDEP (189 aa)).

Belongs to the eIF-3 subunit L family. Component of the eukaryotic translation initiation factor 3 (eIF-3) complex.

Its subcellular location is the cytoplasm. Functionally, component of the eukaryotic translation initiation factor 3 (eIF-3) complex, which is involved in protein synthesis of a specialized repertoire of mRNAs and, together with other initiation factors, stimulates binding of mRNA and methionyl-tRNAi to the 40S ribosome. The eIF-3 complex specifically targets and initiates translation of a subset of mRNAs involved in cell proliferation. This Caenorhabditis elegans protein is Eukaryotic translation initiation factor 3 subunit L.